The primary structure comprises 424 residues: Serine--tRNA ligase (424 aa).

230-232 (TAE) serves as a coordination point for L-serine. 261 to 263 (RSE) lines the ATP pocket. Glu-284 is an L-serine binding site. 348–351 (EISS) contacts ATP. Ser-384 contributes to the L-serine binding site.

It belongs to the class-II aminoacyl-tRNA synthetase family. Type-1 seryl-tRNA synthetase subfamily. Homodimer. The tRNA molecule binds across the dimer.

It is found in the cytoplasm. It catalyses the reaction tRNA(Ser) + L-serine + ATP = L-seryl-tRNA(Ser) + AMP + diphosphate + H(+). The enzyme catalyses tRNA(Sec) + L-serine + ATP = L-seryl-tRNA(Sec) + AMP + diphosphate + H(+). It functions in the pathway aminoacyl-tRNA biosynthesis; selenocysteinyl-tRNA(Sec) biosynthesis; L-seryl-tRNA(Sec) from L-serine and tRNA(Sec): step 1/1. Functionally, catalyzes the attachment of serine to tRNA(Ser). Is also able to aminoacylate tRNA(Sec) with serine, to form the misacylated tRNA L-seryl-tRNA(Sec), which will be further converted into selenocysteinyl-tRNA(Sec). The sequence is that of Serine--tRNA ligase from Nitratidesulfovibrio vulgaris (strain ATCC 29579 / DSM 644 / CCUG 34227 / NCIMB 8303 / VKM B-1760 / Hildenborough) (Desulfovibrio vulgaris).